Reading from the N-terminus, the 140-residue chain is Large ribosomal subunit protein bL17 (140 aa).

It belongs to the bacterial ribosomal protein bL17 family. Part of the 50S ribosomal subunit. Contacts protein L32.

The polypeptide is Large ribosomal subunit protein bL17 (Rhizobium etli (strain CIAT 652)).